Reading from the N-terminus, the 234-residue chain is Urease accessory protein UreF (234 aa).

Belongs to the UreF family. In terms of assembly, ureD, UreF and UreG form a complex that acts as a GTP-hydrolysis-dependent molecular chaperone, activating the urease apoprotein by helping to assemble the nickel containing metallocenter of UreC. The UreE protein probably delivers the nickel.

It is found in the cytoplasm. Required for maturation of urease via the functional incorporation of the urease nickel metallocenter. In Azoarcus sp. (strain BH72), this protein is Urease accessory protein UreF.